A 422-amino-acid polypeptide reads, in one-letter code: Serine hydroxymethyltransferase (422 aa).

(6S)-5,6,7,8-tetrahydrofolate contacts are provided by residues leucine 118 and 122-124 (GHL). Lysine 227 carries the post-translational modification N6-(pyridoxal phosphate)lysine. Residues glutamate 243 and 351–353 (SPF) each bind (6S)-5,6,7,8-tetrahydrofolate.

It belongs to the SHMT family. In terms of assembly, homodimer. Pyridoxal 5'-phosphate serves as cofactor.

It localises to the cytoplasm. It carries out the reaction (6R)-5,10-methylene-5,6,7,8-tetrahydrofolate + glycine + H2O = (6S)-5,6,7,8-tetrahydrofolate + L-serine. The protein operates within one-carbon metabolism; tetrahydrofolate interconversion. Its pathway is amino-acid biosynthesis; glycine biosynthesis; glycine from L-serine: step 1/1. Catalyzes the reversible interconversion of serine and glycine with tetrahydrofolate (THF) serving as the one-carbon carrier. This reaction serves as the major source of one-carbon groups required for the biosynthesis of purines, thymidylate, methionine, and other important biomolecules. Also exhibits THF-independent aldolase activity toward beta-hydroxyamino acids, producing glycine and aldehydes, via a retro-aldol mechanism. The polypeptide is Serine hydroxymethyltransferase (Fervidobacterium nodosum (strain ATCC 35602 / DSM 5306 / Rt17-B1)).